Here is a 546-residue protein sequence, read N- to C-terminus: T-complex protein 1 subunit zeta (546 aa).

The residue at position 2 (Ser-2) is an N-acetylserine. The residue at position 249 (Ser-249) is a Phosphoserine.

It belongs to the TCP-1 chaperonin family. In terms of assembly, heterooligomeric complex of about 850 to 900 kDa that forms two stacked rings, 12 to 16 nm in diameter.

It localises to the cytoplasm. Its function is as follows. Molecular chaperone; assists the folding of proteins upon ATP hydrolysis. Known to play a role, in vitro, in the folding of actin and tubulin. In yeast may play a role in mitotic spindle formation. The polypeptide is T-complex protein 1 subunit zeta (CCT6) (Saccharomyces cerevisiae (strain ATCC 204508 / S288c) (Baker's yeast)).